Here is a 453-residue protein sequence, read N- to C-terminus: Potassium/proton antiporter CemA (453 aa).

4 helical membrane passes run 235 to 255, 328 to 348, 378 to 398, and 414 to 434; these read YMAC…IIFL, ICTI…ACLL, ILLL…EIII, and VSCF…YWIF.

Belongs to the CemA family.

The protein localises to the plastid. It localises to the chloroplast inner membrane. It carries out the reaction K(+)(in) + H(+)(out) = K(+)(out) + H(+)(in). Contributes to K(+)/H(+) antiport activity by supporting proton efflux to control proton extrusion and homeostasis in chloroplasts in a light-dependent manner to modulate photosynthesis. Prevents excessive induction of non-photochemical quenching (NPQ) under continuous-light conditions. Indirectly promotes efficient inorganic carbon uptake into chloroplasts. This chain is Potassium/proton antiporter CemA, found in Zygnema circumcarinatum (Green alga).